Consider the following 575-residue polypeptide: Intermediate filament protein ifd-1 (575 aa).

Positions 1-56 (MSKLNPRVAHNPVLSRIIESGRTNLPSGITSAGSLSAYAQAAAVTIRDNRDREKRE) are head. One can recognise an IF rod domain in the interval 53–406 (EKREIADLNN…KLMEQAENLR (354 aa)). Positions 57–88 (IADLNNRLARYVEKVRFLEAQNRVLENDIGLF) are coil 1A. A linker 1 region spans residues 89-102 (RQAAHIHTGKVRDY). Residues 103–240 (YDAEKTSLAT…STHEIAIREE (138 aa)) are coil 1B. The segment at 241 to 258 (INKARRDSTDKNREFFHR) is linker 12. Residues 259–408 (ELHMSMKEIR…MEQAENLRTS (150 aa)) form a coil 2 region. Residues 409-572 (YQSDFVIDTP…DEVGWYAHVS (164 aa)) are tail. Residues 459–575 (NTQQFRSYGK…GWYAHVSYSH (117 aa)) enclose the LTD domain.

It belongs to the intermediate filament family.

Its subcellular location is the cytoplasm. In terms of biological role, cytoplasmic intermediate filaments provide mechanical strength to cells. Not essential protein. The chain is Intermediate filament protein ifd-1 from Caenorhabditis elegans.